The chain runs to 502 residues: Aspartyl/glutamyl-tRNA(Asn/Gln) amidotransferase subunit B (502 aa).

It belongs to the GatB/GatE family. GatB subfamily. As to quaternary structure, heterotrimer of A, B and C subunits.

It carries out the reaction L-glutamyl-tRNA(Gln) + L-glutamine + ATP + H2O = L-glutaminyl-tRNA(Gln) + L-glutamate + ADP + phosphate + H(+). It catalyses the reaction L-aspartyl-tRNA(Asn) + L-glutamine + ATP + H2O = L-asparaginyl-tRNA(Asn) + L-glutamate + ADP + phosphate + 2 H(+). In terms of biological role, allows the formation of correctly charged Asn-tRNA(Asn) or Gln-tRNA(Gln) through the transamidation of misacylated Asp-tRNA(Asn) or Glu-tRNA(Gln) in organisms which lack either or both of asparaginyl-tRNA or glutaminyl-tRNA synthetases. The reaction takes place in the presence of glutamine and ATP through an activated phospho-Asp-tRNA(Asn) or phospho-Glu-tRNA(Gln). The sequence is that of Aspartyl/glutamyl-tRNA(Asn/Gln) amidotransferase subunit B from Arthrobacter sp. (strain FB24).